A 72-amino-acid chain; its full sequence is Putative transmembrane protein DDB_G0272126 (72 aa).

Helical transmembrane passes span 6 to 26 and 38 to 58; these read KIIKSSYTLLSFFYFIANTII and IILVSLYYLVFSLFITRIFYG.

The protein localises to the membrane. In Dictyostelium discoideum (Social amoeba), this protein is Putative transmembrane protein DDB_G0272126.